Reading from the N-terminus, the 485-residue chain is Cobyric acid synthase (485 aa).

In terms of domain architecture, GATase cobBQ-type spans 249–437 (HLKIRVPVWQ…WHGLFSQPSA (189 aa)). Residue C330 is the Nucleophile of the active site. Residue H429 is part of the active site.

The protein belongs to the CobB/CobQ family. CobQ subfamily.

The protein operates within cofactor biosynthesis; adenosylcobalamin biosynthesis. In terms of biological role, catalyzes amidations at positions B, D, E, and G on adenosylcobyrinic A,C-diamide. NH(2) groups are provided by glutamine, and one molecule of ATP is hydrogenolyzed for each amidation. In Saccharophagus degradans (strain 2-40 / ATCC 43961 / DSM 17024), this protein is Cobyric acid synthase.